We begin with the raw amino-acid sequence, 74 residues long: uncharacterized protein (74 aa).

This is an uncharacterized protein from Saccharomyces cerevisiae (strain ATCC 204508 / S288c) (Baker's yeast).